The chain runs to 129 residues: Large ribosomal subunit protein bL20 (129 aa).

Basic residues predominate over residues 1-17 (MARVKRSVNAHKKRRSV). Positions 1 to 29 (MARVKRSVNAHKKRRSVLKASKGYRGQRS) are disordered.

Belongs to the bacterial ribosomal protein bL20 family.

Its function is as follows. Binds directly to 23S ribosomal RNA and is necessary for the in vitro assembly process of the 50S ribosomal subunit. It is not involved in the protein synthesizing functions of that subunit. The protein is Large ribosomal subunit protein bL20 of Mycobacterium ulcerans (strain Agy99).